A 176-amino-acid polypeptide reads, in one-letter code: ATP-dependent protease subunit HslV (176 aa).

Residue Thr2 is part of the active site. Na(+)-binding residues include Ala157, Cys160, and Thr163.

It belongs to the peptidase T1B family. HslV subfamily. A double ring-shaped homohexamer of HslV is capped on each side by a ring-shaped HslU homohexamer. The assembly of the HslU/HslV complex is dependent on binding of ATP.

The protein localises to the cytoplasm. It carries out the reaction ATP-dependent cleavage of peptide bonds with broad specificity.. Its activity is regulated as follows. Allosterically activated by HslU binding. Functionally, protease subunit of a proteasome-like degradation complex believed to be a general protein degrading machinery. The protein is ATP-dependent protease subunit HslV of Buchnera aphidicola subsp. Schizaphis graminum (strain Sg).